A 366-amino-acid chain; its full sequence is Pyruvate dehydrogenase E1 component subunit beta, mitochondrial (366 aa).

Residues 1 to 33 (MFSRLPTSLARNVARRAPTSFVRPSAAAAALRF) constitute a mitochondrion transit peptide. Glutamate 95 provides a ligand contact to thiamine diphosphate. Residues alanine 196, isoleucine 197, aspartate 199, and asparagine 201 each contribute to the K(+) site.

Pyruvate dehydrogenase (E1) is a tetramer of 2 alpha and 2 beta subunits. Eukaryotic pyruvate dehydrogenase (PDH) complexes are organized as a core consisting of the oligomeric dihydrolipoamide acetyl-transferase (E2), around which are arranged multiple copies of pyruvate dehydrogenase (E1), dihydrolipoamide dehydrogenase (E3) and protein X (E3BP) bound by non-covalent bonds. It depends on thiamine diphosphate as a cofactor.

The protein localises to the mitochondrion matrix. The catalysed reaction is N(6)-[(R)-lipoyl]-L-lysyl-[protein] + pyruvate + H(+) = N(6)-[(R)-S(8)-acetyldihydrolipoyl]-L-lysyl-[protein] + CO2. In terms of biological role, the pyruvate dehydrogenase complex catalyzes the overall conversion of pyruvate to acetyl-CoA and CO(2). The sequence is that of Pyruvate dehydrogenase E1 component subunit beta, mitochondrial (PDB1) from Saccharomyces cerevisiae (strain ATCC 204508 / S288c) (Baker's yeast).